We begin with the raw amino-acid sequence, 1099 residues long: Adenylate cyclase type 7 (1099 aa).

The Cytoplasmic portion of the chain corresponds to 1-33; it reads MPAKGRYFLNEGDEGPDQAALYEKYRLTSLHGP. 6 helical membrane passes run 34 to 54, 63 to 83, 95 to 117, 122 to 142, 147 to 167, and 178 to 198; these read LLLLLLLVAAATCIALISIAF, QVVLGTAFLMLTLFVALYVLV, ALALLTWACLMVLGSVLMWDSLE, AWEQVPFFLFVVFVVYALLPL, AIVAGVTSTVSHLLVFGAVTR, and LGLQLLANAVILLGGNFTGAF. At 199-595 the chain is on the cytoplasmic side; the sequence is HKHQLQDASR…YRLVPIPRAR (397 aa). Mg(2+) is bound by residues D286, I287, and D330. ATP contacts are provided by residues 286 to 291, 328 to 330, and R374; these read DIVGFT and LGD. The tract at residues 456 to 476 is disordered; sequence DPRSQQPPPPSHHLSKPKGDA. The interval 479 to 484 is mediates regulation of adenylate cyclase activity by C5 alpha-induced G- beta and gamma pathway; it reads KMRASV. The mediates regulation of adenylate cyclase activity by sphingosine 1-phosphate-induced G alpha 13 pathway stretch occupies residues 493 to 501; sequence WGAARPFAH. The interval 504-543 is disordered; sequence HRESVSSSETPISNGRRQKAIPLRRHRAPDRSASPKGRLE. Polar residues predominate over residues 508-518; that stretch reads VSSSETPISNG. Residues 508 to 585 form a modulates adenylate cyclase activity by modulating the binding of G(s)alpha to the high-affinity G(s)alpha binding site in 7C1a/7C2 region; that stretch reads VSSSETPISN…IFLEKGFERE (78 aa). Residues 519–531 are compositionally biased toward basic residues; that stretch reads RRQKAIPLRRHRA. A run of 3 helical transmembrane segments spans residues 596-616, 621-641, and 670-689; these read YDFACASLVFVCILLVHLLVM, TLGVSFGLVACLLGLVLSFCF, and LVLVVLTVGSLLTVAIINMP. A glycan (N-linked (GlcNAc...) asparagine) is linked at N702. The next 3 membrane-spanning stretches (helical) occupy residues 719–738, 747–766, and 813–833; these read LLPYYTCSCILGFIACSVFL, MLLTVALVAYLLLFNLSPCW, and DLKIMVNFYLILFYATLILLS. The Cytoplasmic segment spans residues 834–1099; it reads RQIDYYCRLD…TAKFQGLGLN (266 aa). Residues K950, 1029–1031, 1036–1040, and K1076 each bind ATP; these read DIW and NVASR.

Belongs to the adenylyl cyclase class-4/guanylyl cyclase family. Mg(2+) serves as cofactor. Mn(2+) is required as a cofactor. Phosphorylated by PRKCD. As to expression, most abundant in heart, spleen and lung.

The protein localises to the membrane. The catalysed reaction is ATP = 3',5'-cyclic AMP + diphosphate. Its activity is regulated as follows. Activated by the G protein alpha subunit. Activated by the G protein beta and gamma subunit complex. Activated by GNA13 and GNA12. Ethanol and phorbol 12,13-dibutanoate significantly potentiate adenylate cyclase activity generated in response to the activation of the prostanoid receptor by the agonist prostaglandin E1(1-) in a PKC-dependent manner. Inhibited by lithium. Its function is as follows. Catalyzes the formation of cAMP in response to activation of G protein-coupled receptors. Functions in signaling cascades activated namely by thrombin and sphingosine 1-phosphate and mediates regulation of cAMP synthesis through synergistic action of the stimulatory G alpha protein with GNA13. Also, during inflammation, mediates zymosan-induced increase intracellular cAMP, leading to protein kinase A pathway activation in order to modulate innate immune responses through heterotrimeric G proteins G(12/13). Functions in signaling cascades activated namely by dopamine and C5 alpha chain and mediates regulation of cAMP synthesis through synergistic action of the stimulatory G protein with G beta:gamma complex. Functions, through cAMP response regulation, to keep inflammation under control during bacterial infection by sensing the presence of serum factors, such as the bioactive lysophospholipid (LPA) that regulate LPS-induced TNF-alpha production. However, it is also required for the optimal functions of B and T cells during adaptive immune responses by regulating cAMP synthesis in both B and T cells. This Mus musculus (Mouse) protein is Adenylate cyclase type 7.